Here is a 423-residue protein sequence, read N- to C-terminus: Glucose-1-phosphate adenylyltransferase (423 aa).

Alpha-D-glucose 1-phosphate contacts are provided by residues tyrosine 98, glycine 163, 178-179 (EK), and serine 189.

Belongs to the bacterial/plant glucose-1-phosphate adenylyltransferase family. Homotetramer.

It carries out the reaction alpha-D-glucose 1-phosphate + ATP + H(+) = ADP-alpha-D-glucose + diphosphate. It functions in the pathway glycan biosynthesis; glycogen biosynthesis. Involved in the biosynthesis of ADP-glucose, a building block required for the elongation reactions to produce glycogen. Catalyzes the reaction between ATP and alpha-D-glucose 1-phosphate (G1P) to produce pyrophosphate and ADP-Glc. In Thermotoga sp. (strain RQ2), this protein is Glucose-1-phosphate adenylyltransferase.